A 656-amino-acid polypeptide reads, in one-letter code: UV-damage endonuclease (656 aa).

7 disordered regions span residues 1–82, 119–146, 175–194, 241–264, 492–515, 550–620, and 636–656; these read MPSR…GKEQ, PSVV…KEPV, IIEP…RPPA, PLQF…EPQD, EPCD…TLPP, DMVP…GPYN, and KREV…EFDG. Low complexity predominate over residues 13–32; sequence TPQSESSTFSSTLDSSAPSP. Basic and acidic residues-rich tracts occupy residues 48 to 82 and 135 to 146; these read SEKD…GKEQ and TNAEEREAKEPV. The segment covering 550–561 has biased composition (basic and acidic residues); it reads DMVPYDRDDENR. Over residues 568-579 the composition is skewed to basic residues; that stretch reads APKKKKGGKRKR. Acidic residues predominate over residues 583 to 595; sequence EEAAEPEEVDTAA. A compositionally biased stretch (basic and acidic residues) spans 596–614; sequence DDVKDAPEGPKEVPEEERA. The segment covering 647 to 656 has biased composition (acidic residues); the sequence is EVEDEGEFDG.

This sequence belongs to the uve1/UvsE family. The cofactor is Mg(2+).

Its function is as follows. Endonuclease for the repair of UV-irradiated DNA. Involved in the excision of cyclobutane pyrimidine dimers (CPD) and 6-4 pyrimidine pyrimidones (6-4PP) which forms the UV damage repair (UVDR) pathway. This chain is UV-damage endonuclease (mus-18), found in Neurospora crassa (strain ATCC 24698 / 74-OR23-1A / CBS 708.71 / DSM 1257 / FGSC 987).